The primary structure comprises 242 residues: Probable transcriptional regulatory protein Bxeno_A1185 (242 aa).

This sequence belongs to the TACO1 family.

Its subcellular location is the cytoplasm. The protein is Probable transcriptional regulatory protein Bxeno_A1185 of Paraburkholderia xenovorans (strain LB400).